Here is a 341-residue protein sequence, read N- to C-terminus: Aspartate carbamoyltransferase catalytic subunit (341 aa).

Carbamoyl phosphate contacts are provided by arginine 74 and threonine 75. Residue lysine 102 coordinates L-aspartate. Carbamoyl phosphate is bound by residues arginine 124, histidine 152, and glutamine 155. 2 residues coordinate L-aspartate: arginine 190 and arginine 244. Carbamoyl phosphate is bound by residues glycine 285 and proline 286.

This sequence belongs to the aspartate/ornithine carbamoyltransferase superfamily. ATCase family. Heterododecamer (2C3:3R2) of six catalytic PyrB chains organized as two trimers (C3), and six regulatory PyrI chains organized as three dimers (R2).

The enzyme catalyses carbamoyl phosphate + L-aspartate = N-carbamoyl-L-aspartate + phosphate + H(+). It participates in pyrimidine metabolism; UMP biosynthesis via de novo pathway; (S)-dihydroorotate from bicarbonate: step 2/3. Functionally, catalyzes the condensation of carbamoyl phosphate and aspartate to form carbamoyl aspartate and inorganic phosphate, the committed step in the de novo pyrimidine nucleotide biosynthesis pathway. The sequence is that of Aspartate carbamoyltransferase catalytic subunit from Novosphingobium aromaticivorans (strain ATCC 700278 / DSM 12444 / CCUG 56034 / CIP 105152 / NBRC 16084 / F199).